The chain runs to 78 residues: Omega-conotoxin-like ArMKLT1-011 (78 aa).

The N-terminal stretch at 1–22 is a signal peptide; that stretch reads MKLTCMMIVAVLFLTAWTSVTA. Residues 23 to 48 constitute a propeptide that is removed on maturation; it reads VNTRGELENLFLRASHEMNSEASKLD. Intrachain disulfides connect cysteine 52–cysteine 69, cysteine 59–cysteine 73, and cysteine 68–cysteine 77.

It belongs to the conotoxin O1 superfamily. In terms of tissue distribution, expressed by the venom duct.

It is found in the secreted. Its function is as follows. Omega-conotoxins act at presynaptic membranes, they bind and block voltage-gated calcium channels (Cav). This Conus arenatus (Sand-dusted cone) protein is Omega-conotoxin-like ArMKLT1-011.